We begin with the raw amino-acid sequence, 378 residues long: Ribosomal RNA large subunit methyltransferase G (378 aa).

It belongs to the methyltransferase superfamily. RlmG family.

The protein localises to the cytoplasm. The catalysed reaction is guanosine(1835) in 23S rRNA + S-adenosyl-L-methionine = N(2)-methylguanosine(1835) in 23S rRNA + S-adenosyl-L-homocysteine + H(+). In terms of biological role, specifically methylates the guanine in position 1835 (m2G1835) of 23S rRNA. This chain is Ribosomal RNA large subunit methyltransferase G, found in Salmonella arizonae (strain ATCC BAA-731 / CDC346-86 / RSK2980).